Reading from the N-terminus, the 1082-residue chain is TNF receptor-associated factor homolog 1b (1082 aa).

Positions Met1 to Asp54 are disordered. N-acetylalanine is present on Ala2. A compositionally biased stretch (polar residues) spans Trp33–Ser49. The MATH domain maps to Tyr67 to Val198. Disordered regions lie at residues Leu358–Glu388, Thr440–Gly666, Ser697–Leu762, Leu780–Ile800, Ser812–Thr841, and Ser858–Ser889. 2 stretches are compositionally biased toward basic and acidic residues: residues Pro359–Glu388 and Thr440–Lys453. A coiled-coil region spans residues Arg446–Lys507. Residues Lys454 to Asp471 show a composition bias toward basic residues. The span at Lys472–Glu488 shows a compositional bias: basic and acidic residues. Composition is skewed to low complexity over residues Gly519–Ile534 and Ser560–Ser573. Composition is skewed to polar residues over residues Asp588 to Lys630 and Gln645 to Gly666. Low complexity-rich tracts occupy residues Ser858–Gly871 and Pro878–Ser889.

As to quaternary structure, forms homooligomers. Interacts with SNC1, RPS2 and CPR1/CPR30. Interacts with ATG6.

The protein localises to the cytoplasm. It is found in the cell membrane. In terms of biological role, functions redundantly with TRAF1A in the regulation of plant immune response. Contributes to the turnover of the nucleotide-binding domain and leucine-rich repeat-containing (NB-LRR) immune receptors SNC1 and RPS2. May associate with an E3 ubiquitin-protein ligase complex, which modulates ubiquitination and subsequent degradation of NB-LRR immune sensors to maintain their homeostasis. Functions redundantly with TRAF1A in the regulation of autophagosome formation. Required for SINAT1- and SINAT2-mediated ubiquitination and destabilization of ATG6. Functions as a molecular adapter that helps to regulate autophagy by modulating ATG6 stability. The polypeptide is TNF receptor-associated factor homolog 1b (Arabidopsis thaliana (Mouse-ear cress)).